The following is a 207-amino-acid chain: Protein GrpE (207 aa).

Over residues Met1–Asn11 the composition is skewed to basic and acidic residues. The interval Met1–Glu39 is disordered.

The protein belongs to the GrpE family. In terms of assembly, homodimer.

The protein localises to the cytoplasm. Participates actively in the response to hyperosmotic and heat shock by preventing the aggregation of stress-denatured proteins, in association with DnaK and GrpE. It is the nucleotide exchange factor for DnaK and may function as a thermosensor. Unfolded proteins bind initially to DnaJ; upon interaction with the DnaJ-bound protein, DnaK hydrolyzes its bound ATP, resulting in the formation of a stable complex. GrpE releases ADP from DnaK; ATP binding to DnaK triggers the release of the substrate protein, thus completing the reaction cycle. Several rounds of ATP-dependent interactions between DnaJ, DnaK and GrpE are required for fully efficient folding. This chain is Protein GrpE, found in Rhodopseudomonas palustris (strain TIE-1).